The primary structure comprises 276 residues: Diaminopimelate epimerase (276 aa).

Residues Asn13, Gln46, and Asn66 each contribute to the substrate site. Cys75 serves as the catalytic Proton donor. Substrate contacts are provided by residues 76 to 77, Asn159, Asn192, and 210 to 211; these read GN and ER. The active-site Proton acceptor is the Cys219. 220-221 contacts substrate; it reads GT.

It belongs to the diaminopimelate epimerase family. In terms of assembly, homodimer.

The protein resides in the cytoplasm. It carries out the reaction (2S,6S)-2,6-diaminopimelate = meso-2,6-diaminopimelate. It functions in the pathway amino-acid biosynthesis; L-lysine biosynthesis via DAP pathway; DL-2,6-diaminopimelate from LL-2,6-diaminopimelate: step 1/1. In terms of biological role, catalyzes the stereoinversion of LL-2,6-diaminopimelate (L,L-DAP) to meso-diaminopimelate (meso-DAP), a precursor of L-lysine and an essential component of the bacterial peptidoglycan. In Pseudomonas syringae pv. syringae (strain B728a), this protein is Diaminopimelate epimerase.